A 32-amino-acid polypeptide reads, in one-letter code: Cytochrome b6-f complex subunit 7 (32 aa).

A helical membrane pass occupies residues 5–25; that stretch reads IFTVAGVMWALVLTGLSVGFG.

This sequence belongs to the PetM family. The 4 large subunits of the cytochrome b6-f complex are cytochrome b6, subunit IV (17 kDa polypeptide, PetD), cytochrome f and the Rieske protein, while the 4 small subunits are PetG, PetL, PetM and PetN. The complex functions as a dimer.

It localises to the plastid. Its subcellular location is the chloroplast thylakoid membrane. Functionally, component of the cytochrome b6-f complex, which mediates electron transfer between photosystem II (PSII) and photosystem I (PSI), cyclic electron flow around PSI, and state transitions. This chain is Cytochrome b6-f complex subunit 7, found in Emiliania huxleyi (Coccolithophore).